The sequence spans 1047 residues: Carbamoyl phosphate synthase large chain (1047 aa).

The interval 1-398 (MPRRDDIHRI…ALMKAIASLD (398 aa)) is carboxyphosphate synthetic domain. ATP is bound by residues Arg129, Arg169, Gly175, Gly176, Glu208, Leu210, Glu215, Gly241, Val242, His243, Gln284, and Glu296. The ATP-grasp 1 domain maps to 133 to 325 (YEFLKAMGEP…IARIAAKIAA (193 aa)). Positions 284, 296, and 298 each coordinate Mg(2+). Residues Gln284, Glu296, and Asn298 each contribute to the Mn(2+) site. The tract at residues 399 to 539 (NAFSSNIRLH…YSTYEDEDET (141 aa)) is oligomerization domain. Residues 540-916 (PDLSGSIMII…ALRKSLQRSI (377 aa)) are carbamoyl phosphate synthetic domain. An ATP-grasp 2 domain is found at 665-854 (SRVIEGLGIK…WVRLAVECMI (190 aa)). Arg701, Lys738, Leu740, Glu745, Gly770, Val771, His772, Ser773, Gln813, and Glu825 together coordinate ATP. The Mg(2+) site is built by Gln813, Glu825, and Asn827. Mn(2+) contacts are provided by Gln813, Glu825, and Asn827. In terms of domain architecture, MGS-like spans 910 to 1047 (KSLQRSISSV…REIGDYLQVS (138 aa)). Residues 916–1047 (ISSVLITVRD…REIGDYLQVS (132 aa)) are allosteric domain.

It belongs to the CarB family. Composed of two chains; the small (or glutamine) chain promotes the hydrolysis of glutamine to ammonia, which is used by the large (or ammonia) chain to synthesize carbamoyl phosphate. Tetramer of heterodimers (alpha,beta)4. Mg(2+) is required as a cofactor. The cofactor is Mn(2+).

It carries out the reaction hydrogencarbonate + L-glutamine + 2 ATP + H2O = carbamoyl phosphate + L-glutamate + 2 ADP + phosphate + 2 H(+). The enzyme catalyses hydrogencarbonate + NH4(+) + 2 ATP = carbamoyl phosphate + 2 ADP + phosphate + 2 H(+). It participates in amino-acid biosynthesis; L-arginine biosynthesis; carbamoyl phosphate from bicarbonate: step 1/1. The protein operates within pyrimidine metabolism; UMP biosynthesis via de novo pathway; (S)-dihydroorotate from bicarbonate: step 1/3. Large subunit of the glutamine-dependent carbamoyl phosphate synthetase (CPSase). CPSase catalyzes the formation of carbamoyl phosphate from the ammonia moiety of glutamine, carbonate, and phosphate donated by ATP, constituting the first step of 2 biosynthetic pathways, one leading to arginine and/or urea and the other to pyrimidine nucleotides. The large subunit (synthetase) binds the substrates ammonia (free or transferred from glutamine from the small subunit), hydrogencarbonate and ATP and carries out an ATP-coupled ligase reaction, activating hydrogencarbonate by forming carboxy phosphate which reacts with ammonia to form carbamoyl phosphate. This chain is Carbamoyl phosphate synthase large chain, found in Thermoplasma acidophilum (strain ATCC 25905 / DSM 1728 / JCM 9062 / NBRC 15155 / AMRC-C165).